A 432-amino-acid chain; its full sequence is Repulsive guidance molecule A (432 aa).

Positions 1–29 are cleaved as a signal peptide; sequence MGRGAGSTALGLFQILPVFLCIFPPVTSP. The propeptide at 30–149 is removed in mature form; sequence CKILKCNSEF…NYTHCGLFGD (120 aa). Asn96 carries N-linked (GlcNAc...) asparagine glycosylation. The disordered stretch occupies residues 99 to 122; it reads KDGPTSQPRLRTLPPGDSQERSDS. 2 disulfide bridges follow: Cys126–Cys207 and Cys144–Cys296. Asn140 carries an N-linked (GlcNAc...) asparagine glycan. The GPI-anchor amidated asparagine moiety is linked to residue Asn404. A propeptide spans 405-432 (removed in mature form); it reads AAPSEHPWALPALWVALLSLSQCWLGLL.

Belongs to the repulsive guidance molecule (RGM) family. In terms of processing, autocatalytically cleaved at low pH; the two chains remain linked via two disulfide bonds.

The protein localises to the cell membrane. In terms of biological role, acts as an axon-specific repulsive guidance molecule in the retinotectal system. Repulsive for a subset of axons of the temporal half of the retina. Provides thus positional information for the temporal axons invading the optic tectum in the stratum opticum. The protein is Repulsive guidance molecule A (RGMA) of Gallus gallus (Chicken).